The primary structure comprises 128 residues: Large ribosomal subunit protein bL17 (128 aa).

This sequence belongs to the bacterial ribosomal protein bL17 family. Part of the 50S ribosomal subunit. Contacts protein L32.

This is Large ribosomal subunit protein bL17 from Edwardsiella ictaluri (strain 93-146).